The following is a 522-amino-acid chain: Sorting nexin-1 (522 aa).

Disordered stretches follow at residues 1–84 (MASG…QDQE) and 115–142 (SLPPQEATNSSKPQPTYEELEEEEQEDQ). Phosphoserine is present on residues Ser-32 and Ser-39. The segment covering 35-45 (EAGDSDTEGED) has biased composition (acidic residues). Phosphothreonine occurs at positions 41 and 48. Polar residues predominate over residues 55–73 (KHQSPKITTSLLPINNGSK). Phosphoserine is present on residues Ser-58 and Ser-72. Residues 132 to 142 (EELEEEEQEDQ) are compositionally biased toward acidic residues. Positions 143–272 (FDLTVGITDP…EFLEKEELPR (130 aa)) constitute a PX domain. A 1,2-diacyl-sn-glycero-3-phospho-(1D-myo-inositol-3-phosphate) is bound by residues Arg-186, Ser-188, and Lys-214. Residue Ser-188 is modified to Phosphoserine. Lys-237 carries the N6-acetyllysine modification. Arg-238 lines the a 1,2-diacyl-sn-glycero-3-phospho-(1D-myo-inositol-3-phosphate) pocket. Ser-280 carries the post-translational modification Phosphoserine. The membrane-binding amphipathic helix stretch occupies residues 281–298 (GAGLLKMFNKATDAVSKM). Residues 302–522 (MNESDIWFEE…AFLPEAKAIS (221 aa)) enclose the BAR domain.

The protein belongs to the sorting nexin family. In terms of assembly, predominantly forms heterodimers with BAR domain-containing sorting nexins SNX5, SNX6 and SNX32; can self-associate to form homodimers. The heterodimers are proposed to self-assemble into helical arrays on the membrane to stabilize and expand local membrane curvature underlying endosomal tubule formation. Thought to be a component of the originally described retromer complex (also called SNX-BAR retromer) which is a pentamer containing the heterotrimeric retromer cargo-selective complex (CSC), also described as vacuolar protein sorting subcomplex (VPS) and a heterodimeric membrane-deforming subcomplex formed between SNX1 or SNX2 and SNX5 or SNX6 (also called SNX-BAR subcomplex); the respective CSC and SNX-BAR subcomplexes associate with low affinity. Interacts with SNX5, SNX6, SNX32, VPS26A, VPS29, VPS35, DRD5, DENND5A, KALRN, RHOG (GDP-bound form). The interaction with SNX2 is reported controversially. Interacts with DNAJC13; prevented by presence of HGS. Interacts with HGS.

The protein resides in the endosome membrane. The protein localises to the golgi apparatus. It localises to the trans-Golgi network membrane. It is found in the early endosome membrane. Its subcellular location is the cell projection. The protein resides in the lamellipodium. Its function is as follows. Involved in several stages of intracellular trafficking. Interacts with membranes containing phosphatidylinositol 3-phosphate (PtdIns(3P)) or phosphatidylinositol 3,5-bisphosphate (PtdIns(3,5)P2). Acts in part as component of the retromer membrane-deforming SNX-BAR subcomplex. The SNX-BAR retromer mediates retrograde transport of cargo proteins from endosomes to the trans-Golgi network (TGN) and is involved in endosome-to-plasma membrane transport for cargo protein recycling. The SNX-BAR subcomplex functions to deform the donor membrane into a tubular profile called endosome-to-TGN transport carrier (ETC). Can sense membrane curvature and has in vitro vesicle-to-membrane remodeling activity. Involved in retrograde endosome-to-TGN transport of lysosomal enzyme receptors (IGF2R, M6PR and SORT1) and Shiginella dysenteria toxin stxB. Plays a role in targeting ligand-activated EGFR to the lysosomes for degradation after endocytosis from the cell surface and release from the Golgi. Involvement in retromer-independent endocytic trafficking of P2RY1 and lysosomal degradation of protease-activated receptor-1/F2R. Promotes KALRN- and RHOG-dependent but retromer-independent membrane remodeling such as lamellipodium formation; the function is dependent on GEF activity of KALRN. Required for endocytosis of DRD5 upon agonist stimulation but not for basal receptor trafficking. The chain is Sorting nexin-1 (SNX1) from Homo sapiens (Human).